The sequence spans 599 residues: Sulfite reductase [NADPH] flavoprotein alpha-component (599 aa).

One can recognise a Flavodoxin-like domain in the interval 64–202; sequence ITIISASQTG…AASEWRARVV (139 aa). FMN is bound by residues 70 to 75, 117 to 120, and 153 to 162; these read SQTGNA, STQG, and LGDSSYEFFC. The region spanning 234–448 is the FAD-binding FR-type domain; that stretch reads DAPLAASLSV…IEHNDNFRLP (215 aa). Residues Thr322, Ala356, 386-389, 404-406, Tyr410, and 419-422 contribute to the FAD site; these read RLYS, TVG, and GGAS. Residues 519 to 520, 525 to 529, and Asp561 each bind NADP(+); these read SR and KIYVQ. Tyr599 contacts FAD.

The protein belongs to the NADPH-dependent sulphite reductase flavoprotein subunit CysJ family. In the N-terminal section; belongs to the flavodoxin family. It in the C-terminal section; belongs to the flavoprotein pyridine nucleotide cytochrome reductase family. Alpha(8)-beta(8). The alpha component is a flavoprotein, the beta component is a hemoprotein. Requires FAD as cofactor. FMN is required as a cofactor.

It catalyses the reaction hydrogen sulfide + 3 NADP(+) + 3 H2O = sulfite + 3 NADPH + 4 H(+). It participates in sulfur metabolism; hydrogen sulfide biosynthesis; hydrogen sulfide from sulfite (NADPH route): step 1/1. In terms of biological role, component of the sulfite reductase complex that catalyzes the 6-electron reduction of sulfite to sulfide. This is one of several activities required for the biosynthesis of L-cysteine from sulfate. The flavoprotein component catalyzes the electron flow from NADPH -&gt; FAD -&gt; FMN to the hemoprotein component. This chain is Sulfite reductase [NADPH] flavoprotein alpha-component, found in Escherichia coli O6:K15:H31 (strain 536 / UPEC).